Here is a 305-residue protein sequence, read N- to C-terminus: Transcriptional activator protein PfeR (305 aa).

In terms of domain architecture, Response regulatory spans 79 to 192 (RLLLVEDDPR…ELDARTDALL (114 aa)). Position 128 is a 4-aspartylphosphate (aspartate 128). The ompR/PhoB-type DNA-binding region spans 200 to 301 (LPLAQRRDTR…VRGQGYLLVE (102 aa)).

In terms of processing, phosphorylated by PfeS.

Its subcellular location is the cytoplasm. Member of the two-component regulatory system PfeR/PfeS. Activates expression of the ferric enterobactin receptor. This is Transcriptional activator protein PfeR (pfeR) from Pseudomonas aeruginosa (strain ATCC 15692 / DSM 22644 / CIP 104116 / JCM 14847 / LMG 12228 / 1C / PRS 101 / PAO1).